Consider the following 696-residue polypeptide: C2 domain-containing protein 2 (696 aa).

Residues 13–33 (AQWLALVSLFVAALATVGLYL) form a helical membrane-spanning segment. One can recognise an SMP-LBD domain in the interval 51–242 (EPGEGPRPGS…PTTVKEAQNL (192 aa)). Residue serine 60 is modified to Phosphoserine. Residues 245–362 (AASTAQESCP…KKQPSGPQSF (118 aa)) form the C2 domain. Phosphoserine occurs at positions 435 and 441. Threonine 445 carries the post-translational modification Phosphothreonine. The tract at residues 539-580 (VDSTHQEDAPSHPERAAASAPPEEAESAQASLAPKPQEDELD) is disordered. A compositionally biased stretch (basic and acidic residues) spans 542–553 (THQEDAPSHPER). A compositionally biased stretch (low complexity) spans 554–572 (AAASAPPEEAESAQASLAP). Serine 581 bears the Phosphoserine mark.

It localises to the membrane. The polypeptide is C2 domain-containing protein 2 (C2CD2) (Homo sapiens (Human)).